The chain runs to 174 residues: Translationally-controlled tumor protein homolog 1 (174 aa).

A TCTP domain is found at Met1–Tyr174.

This sequence belongs to the TCTP family.

It localises to the cytoplasm. In terms of biological role, involved in calcium binding and microtubule stabilization. This is Translationally-controlled tumor protein homolog 1 from Dictyostelium discoideum (Social amoeba).